A 376-amino-acid chain; its full sequence is Chaperone protein DnaJ (376 aa).

The J domain maps to 5 to 70; sequence DYYETLGVQK…EKRAAYDQYG (66 aa). The CR-type zinc-finger motif lies at 133–211; that stretch reads GTTKDIKINT…CHGDGRVHKK (79 aa). The Zn(2+) site is built by Cys-146, Cys-149, Cys-163, Cys-166, Cys-185, Cys-188, Cys-199, and Cys-202. CXXCXGXG motif repeat units follow at residues 146 to 153, 163 to 170, 185 to 192, and 199 to 206; these read CDHCDGSG, CPTCHGHG, CPTCQGSG, and CKHCHGDG.

This sequence belongs to the DnaJ family. In terms of assembly, homodimer. Requires Zn(2+) as cofactor.

Its subcellular location is the cytoplasm. Functionally, participates actively in the response to hyperosmotic and heat shock by preventing the aggregation of stress-denatured proteins and by disaggregating proteins, also in an autonomous, DnaK-independent fashion. Unfolded proteins bind initially to DnaJ; upon interaction with the DnaJ-bound protein, DnaK hydrolyzes its bound ATP, resulting in the formation of a stable complex. GrpE releases ADP from DnaK; ATP binding to DnaK triggers the release of the substrate protein, thus completing the reaction cycle. Several rounds of ATP-dependent interactions between DnaJ, DnaK and GrpE are required for fully efficient folding. Also involved, together with DnaK and GrpE, in the DNA replication of plasmids through activation of initiation proteins. This chain is Chaperone protein DnaJ, found in Mannheimia succiniciproducens (strain KCTC 0769BP / MBEL55E).